Reading from the N-terminus, the 461-residue chain is B3 domain-containing protein REM9 (461 aa).

The TF-B3 1 DNA-binding region spans Asn-11–Ser-103. The tract at residues Pro-110–Leu-146 is disordered. A compositionally biased stretch (basic and acidic residues) spans Ile-126 to Ser-143. DNA-binding regions (TF-B3) lie at residues Cys-148–Thr-244 and Leu-230–Ser-332. The interval Phe-333–Thr-415 is disordered. Basic and acidic residues predominate over residues Pro-384–Glu-394. Positions Arg-400 to Thr-415 are enriched in polar residues.

Its subcellular location is the nucleus. The sequence is that of B3 domain-containing protein REM9 (REM9) from Arabidopsis thaliana (Mouse-ear cress).